Here is a 333-residue protein sequence, read N- to C-terminus: Cytochrome f (333 aa).

The N-terminal stretch at 1–44 is a signal peptide; the sequence is MRNASVTARLTRSVRAIVKTLLIAIATVTFYFSCDLALPQSAAA. Heme is bound by residues tyrosine 45, cysteine 66, cysteine 69, and histidine 70. A helical transmembrane segment spans residues 301–318; it reads GLIAFVALVMLAQVMLVL.

It belongs to the cytochrome f family. As to quaternary structure, the 4 large subunits of the cytochrome b6-f complex are cytochrome b6, subunit IV (17 kDa polypeptide, PetD), cytochrome f and the Rieske protein, while the 4 small subunits are PetG, PetL, PetM and PetN. The complex functions as a dimer. Heme is required as a cofactor.

The protein resides in the cellular thylakoid membrane. In terms of biological role, component of the cytochrome b6-f complex, which mediates electron transfer between photosystem II (PSII) and photosystem I (PSI), cyclic electron flow around PSI, and state transitions. The chain is Cytochrome f (petA) from Desmonostoc sp. (strain PCC 7906) (Nostoc sp. (strain PCC 7906)).